We begin with the raw amino-acid sequence, 288 residues long: Pyridoxal kinase PdxY (288 aa).

Substrate is bound by residues S12 and 47 to 48 (TQ). ATP is bound by residues D114, E151, K184, and 211-214 (RPLL). Substrate is bound at residue D225.

It belongs to the pyridoxine kinase family. PdxY subfamily. As to quaternary structure, homodimer. Mg(2+) is required as a cofactor.

The enzyme catalyses pyridoxal + ATP = pyridoxal 5'-phosphate + ADP + H(+). It functions in the pathway cofactor metabolism; pyridoxal 5'-phosphate salvage; pyridoxal 5'-phosphate from pyridoxal: step 1/1. Pyridoxal kinase involved in the salvage pathway of pyridoxal 5'-phosphate (PLP). Catalyzes the phosphorylation of pyridoxal to PLP. In Pseudomonas savastanoi pv. phaseolicola (strain 1448A / Race 6) (Pseudomonas syringae pv. phaseolicola (strain 1448A / Race 6)), this protein is Pyridoxal kinase PdxY.